Reading from the N-terminus, the 138-residue chain is Cysteine desulfuration protein SufE (138 aa).

The active-site Cysteine persulfide intermediate is Cys51.

It belongs to the SufE family. In terms of assembly, homodimer. Interacts with SufS.

Its subcellular location is the cytoplasm. It participates in cofactor biosynthesis; iron-sulfur cluster biosynthesis. Its function is as follows. Participates in cysteine desulfuration mediated by SufS. Cysteine desulfuration mobilizes sulfur from L-cysteine to yield L-alanine and constitutes an essential step in sulfur metabolism for biosynthesis of a variety of sulfur-containing biomolecules. Functions as a sulfur acceptor for SufS, by mediating the direct transfer of the sulfur atom from the S-sulfanylcysteine of SufS, an intermediate product of cysteine desulfuration process. This Escherichia coli O45:K1 (strain S88 / ExPEC) protein is Cysteine desulfuration protein SufE.